A 225-amino-acid polypeptide reads, in one-letter code: 3-demethoxyubiquinol 3-hydroxylase (225 aa).

The span at 1–11 (MSVASTSSGFT) shows a compositional bias: polar residues. The disordered stretch occupies residues 1–20 (MSVASTSSGFTPFSRRRGPL). The Fe cation site is built by glutamate 74, glutamate 104, histidine 107, glutamate 156, glutamate 188, and histidine 191. The disordered stretch occupies residues 181 to 203 (VSQMKDDEAQHRASAERAGGVPL). Residues 184–195 (MKDDEAQHRASA) show a composition bias toward basic and acidic residues.

Belongs to the COQ7 family. It depends on Fe cation as a cofactor.

The protein localises to the cell membrane. It carries out the reaction a 5-methoxy-2-methyl-3-(all-trans-polyprenyl)benzene-1,4-diol + AH2 + O2 = a 3-demethylubiquinol + A + H2O. It functions in the pathway cofactor biosynthesis; ubiquinone biosynthesis. In terms of biological role, catalyzes the hydroxylation of 2-nonaprenyl-3-methyl-6-methoxy-1,4-benzoquinol during ubiquinone biosynthesis. The sequence is that of 3-demethoxyubiquinol 3-hydroxylase from Bordetella petrii (strain ATCC BAA-461 / DSM 12804 / CCUG 43448).